Reading from the N-terminus, the 466-residue chain is Asparagine--tRNA ligase (466 aa).

Belongs to the class-II aminoacyl-tRNA synthetase family. In terms of assembly, homodimer.

Its subcellular location is the cytoplasm. It catalyses the reaction tRNA(Asn) + L-asparagine + ATP = L-asparaginyl-tRNA(Asn) + AMP + diphosphate + H(+). In Buchnera aphidicola subsp. Schizaphis graminum (strain Sg), this protein is Asparagine--tRNA ligase.